A 78-amino-acid chain; its full sequence is Small ribosomal subunit protein bS16c (78 aa).

The protein belongs to the bacterial ribosomal protein bS16 family.

Its subcellular location is the plastid. It is found in the chloroplast. This is Small ribosomal subunit protein bS16c from Amborella trichopoda.